Reading from the N-terminus, the 360-residue chain is 3-isopropylmalate dehydrogenase (360 aa).

G76 to E89 is a binding site for NAD(+). Substrate is bound by residues R96, R106, R134, and D224. Mg(2+) is bound by residues D224, D248, and D252. G282–N294 provides a ligand contact to NAD(+).

Belongs to the isocitrate and isopropylmalate dehydrogenases family. LeuB type 1 subfamily. In terms of assembly, homodimer. Mg(2+) serves as cofactor. The cofactor is Mn(2+).

It is found in the cytoplasm. It carries out the reaction (2R,3S)-3-isopropylmalate + NAD(+) = 4-methyl-2-oxopentanoate + CO2 + NADH. It participates in amino-acid biosynthesis; L-leucine biosynthesis; L-leucine from 3-methyl-2-oxobutanoate: step 3/4. Functionally, catalyzes the oxidation of 3-carboxy-2-hydroxy-4-methylpentanoate (3-isopropylmalate) to 3-carboxy-4-methyl-2-oxopentanoate. The product decarboxylates to 4-methyl-2 oxopentanoate. The protein is 3-isopropylmalate dehydrogenase of Hahella chejuensis (strain KCTC 2396).